The chain runs to 107 residues: SH3 domain-binding glutamic acid-rich-like protein 2 (107 aa).

The SH3-binding motif lies at 61 to 67 (QGNPLPP).

This sequence belongs to the SH3BGR family.

The protein resides in the nucleus. The polypeptide is SH3 domain-binding glutamic acid-rich-like protein 2 (SH3BGRL2) (Bos taurus (Bovine)).